A 285-amino-acid polypeptide reads, in one-letter code: Bifunctional protein FolD (285 aa).

Residues glycine 165–serine 167 and serine 190 each bind NADP(+).

This sequence belongs to the tetrahydrofolate dehydrogenase/cyclohydrolase family. Homodimer.

It catalyses the reaction (6R)-5,10-methylene-5,6,7,8-tetrahydrofolate + NADP(+) = (6R)-5,10-methenyltetrahydrofolate + NADPH. It carries out the reaction (6R)-5,10-methenyltetrahydrofolate + H2O = (6R)-10-formyltetrahydrofolate + H(+). Its pathway is one-carbon metabolism; tetrahydrofolate interconversion. Functionally, catalyzes the oxidation of 5,10-methylenetetrahydrofolate to 5,10-methenyltetrahydrofolate and then the hydrolysis of 5,10-methenyltetrahydrofolate to 10-formyltetrahydrofolate. The polypeptide is Bifunctional protein FolD (Burkholderia ambifaria (strain ATCC BAA-244 / DSM 16087 / CCUG 44356 / LMG 19182 / AMMD) (Burkholderia cepacia (strain AMMD))).